A 274-amino-acid polypeptide reads, in one-letter code: Ethanolamine ammonia-lyase small subunit (274 aa).

Adenosylcob(III)alamin contacts are provided by Val161, Glu182, and Cys211.

It belongs to the EutC family. As to quaternary structure, the basic unit is a heterodimer which dimerizes to form tetramers. The heterotetramers trimerize; 6 large subunits form a core ring with 6 small subunits projecting outwards. The cofactor is adenosylcob(III)alamin.

The protein localises to the bacterial microcompartment. It catalyses the reaction ethanolamine = acetaldehyde + NH4(+). Its pathway is amine and polyamine degradation; ethanolamine degradation. Functionally, catalyzes the deamination of various vicinal amino-alcohols to oxo compounds. Allows this organism to utilize ethanolamine as the sole source of nitrogen and carbon in the presence of external vitamin B12. In Pseudomonas fluorescens (strain Pf0-1), this protein is Ethanolamine ammonia-lyase small subunit.